The primary structure comprises 150 residues: UPF0735 ACT domain-containing protein Helmi_18680 (150 aa).

Positions 72–147 (SVSLLLEHHP…GVRSAQLVGS (76 aa)) constitute an ACT domain.

It belongs to the UPF0735 family.

The protein is UPF0735 ACT domain-containing protein Helmi_18680 of Heliobacterium modesticaldum (strain ATCC 51547 / Ice1).